The following is a 279-amino-acid chain: ATP synthase subunit delta (279 aa).

It belongs to the ATPase delta chain family. F-type ATPases have 2 components, F(1) - the catalytic core - and F(0) - the membrane proton channel. F(1) has five subunits: alpha(3), beta(3), gamma(1), delta(1), epsilon(1). F(0) has three main subunits: a(1), b(2) and c(10-14). The alpha and beta chains form an alternating ring which encloses part of the gamma chain. F(1) is attached to F(0) by a central stalk formed by the gamma and epsilon chains, while a peripheral stalk is formed by the delta and b chains.

Its subcellular location is the cell membrane. Its function is as follows. F(1)F(0) ATP synthase produces ATP from ADP in the presence of a proton or sodium gradient. F-type ATPases consist of two structural domains, F(1) containing the extramembraneous catalytic core and F(0) containing the membrane proton channel, linked together by a central stalk and a peripheral stalk. During catalysis, ATP synthesis in the catalytic domain of F(1) is coupled via a rotary mechanism of the central stalk subunits to proton translocation. This protein is part of the stalk that links CF(0) to CF(1). It either transmits conformational changes from CF(0) to CF(1) or is implicated in proton conduction. This chain is ATP synthase subunit delta, found in Parafrankia sp. (strain EAN1pec).